Consider the following 513-residue polypeptide: Putative ATP-dependent RNA helicase QP509L (513 aa).

The Helicase ATP-binding domain maps to K110–P262. L123–T130 is a binding site for ATP. The short motif at D215 to H218 is the DEAH box element.

It belongs to the DEAD box helicase family. DEAH subfamily.

It catalyses the reaction ATP + H2O = ADP + phosphate + H(+). This is Putative ATP-dependent RNA helicase QP509L from African swine fever virus (isolate Tick/South Africa/Pretoriuskop Pr4/1996) (ASFV).